A 375-amino-acid chain; its full sequence is S-(hydroxymethyl)glutathione dehydrogenase (375 aa).

Zn(2+) is bound at residue Cys40. An NAD(+)-binding site is contributed by His41. Zn(2+) contacts are provided by His62, Glu63, Cys92, Cys95, Cys98, Cys106, and Cys170. Residues 195-200, Asp219, 293-295, and 318-320 contribute to the NAD(+) site; these read GLGGIG, IGV, and TAF.

This sequence belongs to the zinc-containing alcohol dehydrogenase family. Class-III subfamily. In terms of assembly, homotetramer. Requires Zn(2+) as cofactor.

The catalysed reaction is a primary alcohol + NAD(+) = an aldehyde + NADH + H(+). The enzyme catalyses a secondary alcohol + NAD(+) = a ketone + NADH + H(+). It catalyses the reaction S-(hydroxymethyl)glutathione + NADP(+) = S-formylglutathione + NADPH + H(+). It carries out the reaction S-(hydroxymethyl)glutathione + NAD(+) = S-formylglutathione + NADH + H(+). The catalysed reaction is S-nitrosoglutathione + NADH + H(+) = S-(hydroxysulfenamide)glutathione + NAD(+). In terms of biological role, oxidizes long-chain alcohols and, in the presence of glutathione, is able to oxidize formaldehyde. Also acts as a S-nitroso-glutathione reductase by catalyzing the NADH-dependent reduction of S-nitrosoglutathione, thereby regulating protein S-nitrosylation. The protein is S-(hydroxymethyl)glutathione dehydrogenase (flhA) of Paracoccus denitrificans.